The primary structure comprises 269 residues: Putative pyruvate, phosphate dikinase regulatory protein (269 aa).

Position 151 to 158 (151 to 158) interacts with ADP; it reads GISRTSKT.

This sequence belongs to the pyruvate, phosphate/water dikinase regulatory protein family. PDRP subfamily.

The catalysed reaction is N(tele)-phospho-L-histidyl/L-threonyl-[pyruvate, phosphate dikinase] + ADP = N(tele)-phospho-L-histidyl/O-phospho-L-threonyl-[pyruvate, phosphate dikinase] + AMP + H(+). It catalyses the reaction N(tele)-phospho-L-histidyl/O-phospho-L-threonyl-[pyruvate, phosphate dikinase] + phosphate + H(+) = N(tele)-phospho-L-histidyl/L-threonyl-[pyruvate, phosphate dikinase] + diphosphate. Functionally, bifunctional serine/threonine kinase and phosphorylase involved in the regulation of the pyruvate, phosphate dikinase (PPDK) by catalyzing its phosphorylation/dephosphorylation. This is Putative pyruvate, phosphate dikinase regulatory protein from Staphylococcus aureus.